The following is a 1296-amino-acid chain: Phosphoribosylformylglycinamidine synthase (1296 aa).

The interval Trp304–Arg323 is disordered. Residues Gly306 to Asp317 and Ala677 each bind ATP. The Mg(2+) site is built by Asp678, Glu717, Asn721, and Asp885. Ser887 contributes to the ATP binding site. Positions Pro1000–Glu1013 are enriched in basic and acidic residues. A disordered region spans residues Pro1000–Asn1019. The region spanning Val1043 to Gly1296 is the Glutamine amidotransferase type-1 domain. Cys1136 acts as the Nucleophile in catalysis. Residues His1261 and Glu1263 contribute to the active site.

It in the N-terminal section; belongs to the FGAMS family. Monomer.

It is found in the cytoplasm. It catalyses the reaction N(2)-formyl-N(1)-(5-phospho-beta-D-ribosyl)glycinamide + L-glutamine + ATP + H2O = 2-formamido-N(1)-(5-O-phospho-beta-D-ribosyl)acetamidine + L-glutamate + ADP + phosphate + H(+). The protein operates within purine metabolism; IMP biosynthesis via de novo pathway; 5-amino-1-(5-phospho-D-ribosyl)imidazole from N(2)-formyl-N(1)-(5-phospho-D-ribosyl)glycinamide: step 1/2. Phosphoribosylformylglycinamidine synthase involved in the purines biosynthetic pathway. Catalyzes the ATP-dependent conversion of formylglycinamide ribonucleotide (FGAR) and glutamine to yield formylglycinamidine ribonucleotide (FGAM) and glutamate. The polypeptide is Phosphoribosylformylglycinamidine synthase (Yersinia pseudotuberculosis serotype I (strain IP32953)).